Here is a 69-residue protein sequence, read N- to C-terminus: Trypsin/subtilisin inhibitor (69 aa).

A disulfide bridge links C4 with C49.

It belongs to the protease inhibitor I13 (potato type I serine protease inhibitor) family.

In terms of biological role, inhibitor of trypsin, chymotrypsin, subtilisin, etc. The polypeptide is Trypsin/subtilisin inhibitor (Amaranthus caudatus (Love-lies-bleeding)).